Consider the following 268-residue polypeptide: Undecaprenyl-diphosphatase (268 aa).

7 helical membrane-spanning segments follow: residues 47-67 (FAVLIQLGAILAILALYFVKL), 83-103 (FVIGVLVAFLPAAVIGAAFGG), 109-129 (LFNPWVVCFSLIVGGAILLWV), 144-164 (FPLLTYFYIGCAQCTAMIPGV), 184-204 (AAEFSFFLAIPTMLGAFVYDL), 217-237 (IIVAIGFVVSFITAIIVVKTF), and 248-268 (LFAWWRVIVGTLGLIALALGL).

Belongs to the UppP family.

The protein localises to the cell inner membrane. The enzyme catalyses di-trans,octa-cis-undecaprenyl diphosphate + H2O = di-trans,octa-cis-undecaprenyl phosphate + phosphate + H(+). Its function is as follows. Catalyzes the dephosphorylation of undecaprenyl diphosphate (UPP). Confers resistance to bacitracin. The protein is Undecaprenyl-diphosphatase of Rhodopseudomonas palustris (strain ATCC BAA-98 / CGA009).